The primary structure comprises 93 residues: Large ribosomal subunit protein bL27 (93 aa).

A propeptide spanning residues 1–9 (MIKINLQLF) is cleaved from the precursor.

The protein belongs to the bacterial ribosomal protein bL27 family. Post-translationally, the N-terminus is cleaved by ribosomal processing cysteine protease Prp.

The sequence is that of Large ribosomal subunit protein bL27 from Ruminiclostridium cellulolyticum (strain ATCC 35319 / DSM 5812 / JCM 6584 / H10) (Clostridium cellulolyticum).